The sequence spans 343 residues: tRNA N6-adenosine threonylcarbamoyltransferase (343 aa).

Histidine 120 and histidine 124 together coordinate Fe cation. Substrate is bound by residues 142–146, aspartate 175, glycine 188, aspartate 192, and asparagine 281; that span reads VVSGG. Aspartate 310 is a Fe cation binding site.

This sequence belongs to the KAE1 / TsaD family. It depends on Fe(2+) as a cofactor.

The protein resides in the cytoplasm. It catalyses the reaction L-threonylcarbamoyladenylate + adenosine(37) in tRNA = N(6)-L-threonylcarbamoyladenosine(37) in tRNA + AMP + H(+). Its function is as follows. Required for the formation of a threonylcarbamoyl group on adenosine at position 37 (t(6)A37) in tRNAs that read codons beginning with adenine. Is involved in the transfer of the threonylcarbamoyl moiety of threonylcarbamoyl-AMP (TC-AMP) to the N6 group of A37, together with TsaE and TsaB. TsaD likely plays a direct catalytic role in this reaction. This is tRNA N6-adenosine threonylcarbamoyltransferase from Bacillus cereus (strain ATCC 10987 / NRS 248).